The sequence spans 525 residues: MTENIHKHRILILDFGSQYTQLVARRVRELGVYCELWAWDVTEAQIREFNPSGIILSGGPESTTEDNSPRAPQYVFEAGVPVFGVCYGMQTMAMQLGGHVEASNEREFGYAQVEVLTDSALVRGIEDSLTADGKPLLDVWMSHGDKVTAIPSDFVTVASTETCPFAIMANEEKRFYGVQFHPEVTHTRQGMRMLDRFVRDICQCEALWTPAKIIDDAIARIRQQVGDDKVILGLSGGVDSSVTAMLLHRAIGKNLTCVFVDNGLLRLNEAEQVMDMFGDHFGLNIVHVEGEERFLTALAGENDPEAKRKIIGRVFVEVFDEQALRLEDVKWLAQGTIYPDVIESAASATGKAHVIKSHHNVGGLPKEMKMGLVEPLRELFKDEVRKIGLELGLPYDMLYRHPFPGPGLGVRVLGEVKKEYCDLLRRADAIFIEELHKADLYNKVSQAFTVFLPVRSVGVMGDGRKYDWVVSLRAVETIDFMTAHWAHLPYDFLGRVSNRIINEVNGISRVVYDISGKPPATIEWE.

A Glutamine amidotransferase type-1 domain is found at Arg-9 to Leu-207. Cys-86 serves as the catalytic Nucleophile. Active-site residues include His-181 and Glu-183. The 193-residue stretch at Trp-208–Arg-400 folds into the GMPS ATP-PPase domain. Ser-235–Ser-241 contacts ATP.

Homodimer.

The enzyme catalyses XMP + L-glutamine + ATP + H2O = GMP + L-glutamate + AMP + diphosphate + 2 H(+). It functions in the pathway purine metabolism; GMP biosynthesis; GMP from XMP (L-Gln route): step 1/1. Its function is as follows. Catalyzes the synthesis of GMP from XMP. This is GMP synthase [glutamine-hydrolyzing] from Enterobacter sp. (strain 638).